A 176-amino-acid chain; its full sequence is Endothelin-2 (176 aa).

Positions 1–22 are cleaved as a signal peptide; it reads MVSPAWCSIALALLLALHEGKG. Residues 23 to 44 constitute a propeptide that is removed on maturation; the sequence is QAAATMEQPASAPKGRGPHLRF. 2 cysteine pairs are disulfide-bonded: Cys47–Cys61 and Cys49–Cys57. The propeptide occupies 68 to 176; that stretch reads VNTAGQTAPY…IPAHSRRRKR (109 aa). The tract at residues 94 to 109 is endothelin-like; that stretch reads CECSSAGDSACATFCH.

This sequence belongs to the endothelin/sarafotoxin family.

The protein resides in the secreted. Its function is as follows. Vasoconstrictor. This chain is Endothelin-2 (Edn2), found in Rattus norvegicus (Rat).